We begin with the raw amino-acid sequence, 691 residues long: Competence protein ComA (691 aa).

The next 6 helical transmembrane spans lie at 183-203 (HLVS…AWLA), 220-240 (WVLA…GFSV), 280-300 (LAVL…LIWA), 322-342 (VLSL…SPLV), 347-367 (IPWF…VPFA), and 396-416 (VAAA…LLLL).

It to B.subtilis ComEC, H.influenzae REC2, and E.coli YcaI.

It localises to the cell inner membrane. Essential for natural transformation. Could be a transporter involved in DNA uptake. This is Competence protein ComA (comA) from Neisseria gonorrhoeae.